We begin with the raw amino-acid sequence, 493 residues long: Cysteine sulfinic acid decarboxylase (493 aa).

An N6-(pyridoxal phosphate)lysine modification is found at K305.

This sequence belongs to the group II decarboxylase family. As to quaternary structure, homodimer. Pyridoxal 5'-phosphate serves as cofactor. Expressed in brain, liver and kidney.

The catalysed reaction is L-aspartate + H(+) = beta-alanine + CO2. It carries out the reaction 3-sulfino-L-alanine + H(+) = hypotaurine + CO2. It catalyses the reaction L-cysteate + H(+) = taurine + CO2. Its pathway is organosulfur biosynthesis; taurine biosynthesis; hypotaurine from L-cysteine: step 2/2. Catalyzes the decarboxylation of L-aspartate, 3-sulfino-L-alanine (cysteine sulfinic acid), and L-cysteate to beta-alanine, hypotaurine and taurine, respectively. The preferred substrate is 3-sulfino-L-alanine. Does not exhibit any decarboxylation activity toward glutamate. This chain is Cysteine sulfinic acid decarboxylase (Csad), found in Rattus norvegicus (Rat).